We begin with the raw amino-acid sequence, 459 residues long: Exodeoxyribonuclease 7 large subunit (459 aa).

The protein belongs to the XseA family. Heterooligomer composed of large and small subunits.

The protein resides in the cytoplasm. It catalyses the reaction Exonucleolytic cleavage in either 5'- to 3'- or 3'- to 5'-direction to yield nucleoside 5'-phosphates.. Bidirectionally degrades single-stranded DNA into large acid-insoluble oligonucleotides, which are then degraded further into small acid-soluble oligonucleotides. In Pseudomonas aeruginosa (strain LESB58), this protein is Exodeoxyribonuclease 7 large subunit.